A 648-amino-acid chain; its full sequence is Biosynthetic arginine decarboxylase (648 aa).

Lys-109 is subject to N6-(pyridoxal phosphate)lysine. 291–301 serves as a coordination point for substrate; sequence IDVGGGLGIDF.

The protein belongs to the Orn/Lys/Arg decarboxylase class-II family. SpeA subfamily. Mg(2+) serves as cofactor. It depends on pyridoxal 5'-phosphate as a cofactor.

The catalysed reaction is L-arginine + H(+) = agmatine + CO2. The protein operates within amine and polyamine biosynthesis; agmatine biosynthesis; agmatine from L-arginine: step 1/1. Catalyzes the biosynthesis of agmatine from arginine. The chain is Biosynthetic arginine decarboxylase from Prochlorococcus marinus (strain AS9601).